An 867-amino-acid chain; its full sequence is Coiled-coil domain-containing protein 80 (867 aa).

Residues 1–18 (MRARYMLGFGVLCLLTWA) form the signal peptide. Disordered stretches follow at residues 83–121 (RKVL…SSAG) and 282–539 (DSQV…GTLA). Polar residues predominate over residues 95–104 (GTRNPIQQDD). The span at 288–297 (PTERRKEIRK) shows a compositional bias: basic and acidic residues. Residues 301-370 (RPTTTTTPAP…PRTTRANTTP (70 aa)) show a composition bias toward low complexity. Over residues 401-412 (ARYRDNHTSKKE) the composition is skewed to basic and acidic residues. Residues 426–435 (KPTKVRPTKK) show a composition bias toward basic residues. Positions 436–451 (KNGDKDISNAYEEKYD) are enriched in basic and acidic residues. The segment covering 471 to 483 (KRGKGKTDKKKKK) has biased composition (basic residues). Basic and acidic residues-rich tracts occupy residues 484 to 504 (DKTD…DGKG) and 514 to 523 (KILEKEDYQK).

This sequence belongs to the CCDC80 family. Binds to various extracellular matrix proteins.

The protein localises to the secreted. It is found in the extracellular space. It localises to the extracellular matrix. In terms of biological role, promotes cell adhesion and matrix assembly. The polypeptide is Coiled-coil domain-containing protein 80 (ccdc80) (Danio rerio (Zebrafish)).